The chain runs to 1662 residues: Cortactin-binding protein 2 (1662 aa).

Disordered regions lie at residues 1 to 23 (MATD…AGAA), 203 to 222 (KKKT…RSTE), 361 to 440 (SHSD…LHPG), 454 to 479 (GNAN…PTSR), and 498 to 618 (RFTS…PSID). A coiled-coil region spans residues 119-276 (KKMQERMSAQ…EQLKRGSDSK (158 aa)). A compositionally biased stretch (low complexity) spans 386-396 (PSTDSTPDPTS). The segment covering 411–422 (QTPGIAPQNSQA) has biased composition (polar residues). Arg-498 bears the Asymmetric dimethylarginine mark. A compositionally biased stretch (polar residues) spans 583–597 (TVASPPSSLPQGNRV). ANK repeat units follow at residues 709–739 (GRPT…DINY), 743–772 (DGHS…QINA), 776–805 (NGFT…NINH), 809–838 (GGQT…NRSV), 842–871 (DGWT…PACG), and 912–942 (EGWT…EPER). The disordered stretch occupies residues 1450–1474 (GESGAWRKVNTSPRRKSGRFSLPTW). At Ser-1524 the chain carries Phosphoserine. Disordered stretches follow at residues 1580 to 1602 (SQKE…KSKT) and 1618 to 1662 (SKVT…KPNK). Over residues 1582–1599 (KEVSPLSSHQTTECSNSK) the composition is skewed to polar residues. Residues 1624-1638 (SQNTKRSSSSSNTRQ) show a composition bias toward low complexity. Residues 1639-1648 (IEINNNSKEN) show a composition bias toward polar residues. Over residues 1649–1662 (WNLHKNEHLDKPNK) the composition is skewed to basic and acidic residues.

Interacts with CTTN/cortactin SH3 domain. Interacts with STRN, STRN4/zinedin and MOB4/phocein; this interactions mediate the association with the STRIPAK core complex and may regulate dendritic spine distribution of the STRIPAK complex in hippocampal neurons. Activation of glutamate receptors weakens the interaction with STRN and STRN4.

The protein localises to the cytoplasm. It is found in the cell cortex. Its subcellular location is the cell projection. It localises to the dendritic spine. Its function is as follows. Regulates the dendritic spine distribution of CTTN/cortactin in hippocampal neurons, and thus controls dendritic spinogenesis and dendritic spine maintenance. Associates with the striatin-interacting phosphatase and kinase (STRIPAK) core complex to regulate dendritic spine distribution of the STRIPAK complex in hippocampal neurons. This chain is Cortactin-binding protein 2 (CTTNBP2), found in Chlorocebus aethiops (Green monkey).